The primary structure comprises 235 residues: 2-C-methyl-D-erythritol 4-phosphate cytidylyltransferase (235 aa).

Belongs to the IspD/TarI cytidylyltransferase family. IspD subfamily.

It catalyses the reaction 2-C-methyl-D-erythritol 4-phosphate + CTP + H(+) = 4-CDP-2-C-methyl-D-erythritol + diphosphate. It participates in isoprenoid biosynthesis; isopentenyl diphosphate biosynthesis via DXP pathway; isopentenyl diphosphate from 1-deoxy-D-xylulose 5-phosphate: step 2/6. Functionally, catalyzes the formation of 4-diphosphocytidyl-2-C-methyl-D-erythritol from CTP and 2-C-methyl-D-erythritol 4-phosphate (MEP). The polypeptide is 2-C-methyl-D-erythritol 4-phosphate cytidylyltransferase (Synechococcus sp. (strain JA-3-3Ab) (Cyanobacteria bacterium Yellowstone A-Prime)).